A 210-amino-acid polypeptide reads, in one-letter code: Orotate phosphoribosyltransferase (210 aa).

5-phospho-alpha-D-ribose 1-diphosphate contacts are provided by residues Arg96, Lys100, His102, and 122–130; that span reads EDLISTGGS. Ser126 contributes to the orotate binding site.

Belongs to the purine/pyrimidine phosphoribosyltransferase family. PyrE subfamily. As to quaternary structure, homodimer. Requires Mg(2+) as cofactor.

The catalysed reaction is orotidine 5'-phosphate + diphosphate = orotate + 5-phospho-alpha-D-ribose 1-diphosphate. It functions in the pathway pyrimidine metabolism; UMP biosynthesis via de novo pathway; UMP from orotate: step 1/2. Functionally, catalyzes the transfer of a ribosyl phosphate group from 5-phosphoribose 1-diphosphate to orotate, leading to the formation of orotidine monophosphate (OMP). This Streptococcus pneumoniae serotype 4 (strain ATCC BAA-334 / TIGR4) protein is Orotate phosphoribosyltransferase.